We begin with the raw amino-acid sequence, 42 residues long: Proline-rich antimicrobial peptide 2 (42 aa).

Hemolymph.

It localises to the secreted. In terms of biological role, antimicrobial protein. Has antibacterial activity against the Gram-positive bacterium M.luteus (MIC=8.6 uM). Lacks antibacterial activity against the Gram-positive bacteria B.circulans, L.monocytogenes, S.aureus, and S.lutea, and the Gram-negative bacteria E.coli D31, E.coli ATCC 25922, and S.typhimurium. Lacks antifungal activity against S.cerevisiae, P.pastoris, Z.marxianus, C.albicans, C.fructus, C.wickerhamii, A.niger, F.oxysporum, and T.harizianum. This is Proline-rich antimicrobial peptide 2 from Galleria mellonella (Greater wax moth).